Reading from the N-terminus, the 456-residue chain is Bifunctional protein GlmU (456 aa).

The tract at residues Met1–Lys228 is pyrophosphorylase. Residues Leu11 to Gly14, Lys25, Gln75, Gly80 to Thr81, Tyr102 to Asp104, Gly138, Glu153, Asn168, and Asn226 each bind UDP-N-acetyl-alpha-D-glucosamine. Mg(2+) is bound at residue Asp104. Asn226 serves as a coordination point for Mg(2+). The segment at Leu229 to Ala249 is linker. The tract at residues Gly250–Gln456 is N-acetyltransferase. Positions 332 and 350 each coordinate UDP-N-acetyl-alpha-D-glucosamine. The Proton acceptor role is filled by His362. UDP-N-acetyl-alpha-D-glucosamine contacts are provided by Tyr365 and Asn376. Acetyl-CoA-binding positions include Ala379, Asn385–Tyr386, Ser404, Ala422, and Arg439.

This sequence in the N-terminal section; belongs to the N-acetylglucosamine-1-phosphate uridyltransferase family. It in the C-terminal section; belongs to the transferase hexapeptide repeat family. In terms of assembly, homotrimer. Requires Mg(2+) as cofactor.

The protein resides in the cytoplasm. It catalyses the reaction alpha-D-glucosamine 1-phosphate + acetyl-CoA = N-acetyl-alpha-D-glucosamine 1-phosphate + CoA + H(+). The enzyme catalyses N-acetyl-alpha-D-glucosamine 1-phosphate + UTP + H(+) = UDP-N-acetyl-alpha-D-glucosamine + diphosphate. Its pathway is nucleotide-sugar biosynthesis; UDP-N-acetyl-alpha-D-glucosamine biosynthesis; N-acetyl-alpha-D-glucosamine 1-phosphate from alpha-D-glucosamine 6-phosphate (route II): step 2/2. It functions in the pathway nucleotide-sugar biosynthesis; UDP-N-acetyl-alpha-D-glucosamine biosynthesis; UDP-N-acetyl-alpha-D-glucosamine from N-acetyl-alpha-D-glucosamine 1-phosphate: step 1/1. The protein operates within bacterial outer membrane biogenesis; LPS lipid A biosynthesis. In terms of biological role, catalyzes the last two sequential reactions in the de novo biosynthetic pathway for UDP-N-acetylglucosamine (UDP-GlcNAc). The C-terminal domain catalyzes the transfer of acetyl group from acetyl coenzyme A to glucosamine-1-phosphate (GlcN-1-P) to produce N-acetylglucosamine-1-phosphate (GlcNAc-1-P), which is converted into UDP-GlcNAc by the transfer of uridine 5-monophosphate (from uridine 5-triphosphate), a reaction catalyzed by the N-terminal domain. This is Bifunctional protein GlmU from Neisseria meningitidis serogroup A / serotype 4A (strain DSM 15465 / Z2491).